Here is a 134-residue protein sequence, read N- to C-terminus: Large ribosomal subunit protein uL22 (134 aa).

It belongs to the universal ribosomal protein uL22 family. As to quaternary structure, part of the 50S ribosomal subunit.

Its function is as follows. This protein binds specifically to 23S rRNA; its binding is stimulated by other ribosomal proteins, e.g. L4, L17, and L20. It is important during the early stages of 50S assembly. It makes multiple contacts with different domains of the 23S rRNA in the assembled 50S subunit and ribosome. In terms of biological role, the globular domain of the protein is located near the polypeptide exit tunnel on the outside of the subunit, while an extended beta-hairpin is found that lines the wall of the exit tunnel in the center of the 70S ribosome. This Karelsulcia muelleri (strain GWSS) (Sulcia muelleri) protein is Large ribosomal subunit protein uL22.